Consider the following 269-residue polypeptide: 4-hydroxy-tetrahydrodipicolinate reductase (269 aa).

NAD(+) is bound by residues glycine 8 to methionine 13 and glutamate 34. Residue arginine 35 coordinates NADP(+). Residues glycine 98 to threonine 100 and alanine 122 to tyrosine 125 each bind NAD(+). The active-site Proton donor/acceptor is histidine 155. Residue histidine 156 participates in (S)-2,3,4,5-tetrahydrodipicolinate binding. The active-site Proton donor is the lysine 159. Glycine 165 to threonine 166 serves as a coordination point for (S)-2,3,4,5-tetrahydrodipicolinate.

This sequence belongs to the DapB family.

Its subcellular location is the cytoplasm. The enzyme catalyses (S)-2,3,4,5-tetrahydrodipicolinate + NAD(+) + H2O = (2S,4S)-4-hydroxy-2,3,4,5-tetrahydrodipicolinate + NADH + H(+). It catalyses the reaction (S)-2,3,4,5-tetrahydrodipicolinate + NADP(+) + H2O = (2S,4S)-4-hydroxy-2,3,4,5-tetrahydrodipicolinate + NADPH + H(+). It functions in the pathway amino-acid biosynthesis; L-lysine biosynthesis via DAP pathway; (S)-tetrahydrodipicolinate from L-aspartate: step 4/4. Catalyzes the conversion of 4-hydroxy-tetrahydrodipicolinate (HTPA) to tetrahydrodipicolinate. This chain is 4-hydroxy-tetrahydrodipicolinate reductase, found in Aliivibrio fischeri (strain ATCC 700601 / ES114) (Vibrio fischeri).